The following is a 162-amino-acid chain: Caveolin-2 (162 aa).

Residues 1–86 (MGLETEKADV…FEISKYVMYK (86 aa)) lie on the Cytoplasmic side of the membrane. Y19 carries the phosphotyrosine; by SRC modification. Residues S20 and S23 each carry the phosphoserine modification. Y27 carries the phosphotyrosine; by SRC modification. S36 carries the phosphoserine modification. An intramembrane region (helical) is located at residues 87 to 107 (FLTVFLAIPLAFIAGILFATL). Over 108 to 162 (SCLHIWILMPFVKTCLMVLPSVQTIWKSVTDVFIAPLCTSIGRSFSSVSLQLSQD) the chain is Cytoplasmic.

It belongs to the caveolin family. In terms of assembly, monomer or homodimer. Interacts with CAV1; the interaction forms a stable heterooligomeric complex that is required for targeting to lipid rafts and for caveolae formation. Tyrosine phosphorylated forms do not form heterooligomers with the Tyr-19-phosphorylated form existing as a monomer or dimer, and the Tyr-27-form as a monomer only. Interacts (tyrosine phosphorylated form) with the SH2 domain-containing proteins, RASA1, NCK1 and SRC. Interacts (tyrosine phosphorylated form) with INSR, the interaction (Tyr-27-phosphorylated form) is increased on insulin stimulation. Interacts (Tyr-19 phosphorylated form) with MAPK1 (phosphorylated form); the interaction, promoted by insulin, leads to nuclear location and MAPK1 activation. Interacts with STAT3; the interaction is increased on insulin-induced tyrosine phosphorylation leading to STAT activation. Post-translationally, phosphorylated on serine and tyrosine residues. CAV1 promotes phosphorylation on Ser-23 which then targets the complex to the plasma membrane, lipid rafts and caveolae. Phosphorylation on Ser-36 appears to modulate mitosis in endothelial cells. Phosphorylation on both Tyr-19 and Tyr-27 is required for insulin-induced 'Ser-727' phosphorylation of STAT3 and its activation. Phosphorylation on Tyr-19 is required for insulin-induced phosphorylation of MAPK1 and DNA binding of STAT3. Tyrosine phosphorylation is induced by both EGF and insulin (By. similarity).

It is found in the nucleus. It localises to the cytoplasm. The protein resides in the golgi apparatus membrane. Its subcellular location is the cell membrane. The protein localises to the membrane. It is found in the caveola. In terms of biological role, may act as a scaffolding protein within caveolar membranes. Interacts directly with G-protein alpha subunits and can functionally regulate their activity. Acts as an accessory protein in conjunction with CAV1 in targeting to lipid rafts and driving caveolae formation. The Ser-36 phosphorylated form has a role in modulating mitosis in endothelial cells. Positive regulator of cellular mitogenesis of the MAPK signaling pathway. Required for the insulin-stimulated nuclear translocation and activation of MAPK1 and STAT3, and the subsequent regulation of cell cycle progression. The chain is Caveolin-2 (CAV2) from Papio anubis (Olive baboon).